The chain runs to 277 residues: MKFGIVARRDKEEALKLAYRVYDFLKVSGYDVVVDKDTYEHFPYFNERDVIPLEEFDVDFIIAIGGDGTILRIEHMTKKDIPILSVNMGTLGFLTEVEPSDTFFALSRLIEGEYYIDERIKVRTYINGENRVPDALNEVAILTGIPGKIIHLKYYVDGGLADEVRADGLVVSTPTGSTGYAMSAGGPFVDPRLDVILVVPLLPLPKTSVPMVIPGSSRVDITLVSDREIILAIDGQYYEYLPPDVEITVVKSPRKTKFVRFTKEIYPKYTMKIKERH.

Aspartate 67 (proton acceptor) is an active-site residue. NAD(+)-binding positions include 67-68, arginine 72, 137-138, lysine 148, arginine 165, aspartate 167, 178-183, leucine 202, and glutamine 236; these read DG, NE, and TGYAMS.

Belongs to the NAD kinase family. Requires a divalent metal cation as cofactor.

It is found in the cytoplasm. The catalysed reaction is NAD(+) + ATP = ADP + NADP(+) + H(+). In terms of biological role, involved in the regulation of the intracellular balance of NAD and NADP, and is a key enzyme in the biosynthesis of NADP. Catalyzes specifically the phosphorylation on 2'-hydroxyl of the adenosine moiety of NAD to yield NADP. The sequence is that of NAD kinase from Pyrococcus furiosus (strain ATCC 43587 / DSM 3638 / JCM 8422 / Vc1).